The sequence spans 147 residues: Putative pre-16S rRNA nuclease (147 aa).

Belongs to the YqgF nuclease family.

It is found in the cytoplasm. In terms of biological role, could be a nuclease involved in processing of the 5'-end of pre-16S rRNA. This Acinetobacter baylyi (strain ATCC 33305 / BD413 / ADP1) protein is Putative pre-16S rRNA nuclease.